The primary structure comprises 738 residues: Outer membrane protein assembly factor BamA (738 aa).

The N-terminal stretch at 1 to 13 (MVWLLFLSSFCFA) is a signal peptide. POTRA domains follow at residues 14–81 (DEVV…LQEN), 82–159 (PILR…VKEA), 162–248 (TVIR…LKEG), 251–329 (YSFG…VVST), and 332–404 (YRIR…VKER).

Belongs to the BamA family. In terms of assembly, part of the Bam complex.

It is found in the cell outer membrane. Part of the outer membrane protein assembly complex, which is involved in assembly and insertion of beta-barrel proteins into the outer membrane. The polypeptide is Outer membrane protein assembly factor BamA (Neorickettsia risticii (strain Illinois)).